We begin with the raw amino-acid sequence, 179 residues long: Probable galaptin lec-7 (179 aa).

The Galectin domain maps to 11–138 (SVYQIEENLK…SVDIESIVFK (128 aa)).

This is Probable galaptin lec-7 (lec-7) from Caenorhabditis elegans.